Here is a 478-residue protein sequence, read N- to C-terminus: Bifunctional protein HldE (478 aa).

The tract at residues Met-1 to Thr-318 is ribokinase. Asn-195–Glu-198 contributes to the ATP binding site. Asp-264 is an active-site residue. A cytidylyltransferase region spans residues Met-344–Ser-478.

In the N-terminal section; belongs to the carbohydrate kinase PfkB family. The protein in the C-terminal section; belongs to the cytidylyltransferase family. As to quaternary structure, homodimer.

It carries out the reaction D-glycero-beta-D-manno-heptose 7-phosphate + ATP = D-glycero-beta-D-manno-heptose 1,7-bisphosphate + ADP + H(+). The enzyme catalyses D-glycero-beta-D-manno-heptose 1-phosphate + ATP + H(+) = ADP-D-glycero-beta-D-manno-heptose + diphosphate. The protein operates within nucleotide-sugar biosynthesis; ADP-L-glycero-beta-D-manno-heptose biosynthesis; ADP-L-glycero-beta-D-manno-heptose from D-glycero-beta-D-manno-heptose 7-phosphate: step 1/4. Its pathway is nucleotide-sugar biosynthesis; ADP-L-glycero-beta-D-manno-heptose biosynthesis; ADP-L-glycero-beta-D-manno-heptose from D-glycero-beta-D-manno-heptose 7-phosphate: step 3/4. Its function is as follows. Catalyzes the phosphorylation of D-glycero-D-manno-heptose 7-phosphate at the C-1 position to selectively form D-glycero-beta-D-manno-heptose-1,7-bisphosphate. Catalyzes the ADP transfer from ATP to D-glycero-beta-D-manno-heptose 1-phosphate, yielding ADP-D-glycero-beta-D-manno-heptose. The sequence is that of Bifunctional protein HldE from Pectobacterium atrosepticum (strain SCRI 1043 / ATCC BAA-672) (Erwinia carotovora subsp. atroseptica).